The sequence spans 950 residues: MORC family CW-type zinc finger protein 1 (950 aa).

Positions 281-342 (KGKFKTEVQK…TKHKSLRQKQ (62 aa)) form a coiled coil. A CW-type zinc finger spans residues 465–530 (SLESLQWRRR…SCNQIERLPS (66 aa)). Zn(2+)-binding residues include Cys-485, Cys-488, Cys-511, and Cys-522. 2 disordered regions span residues 532–551 (PLGT…RQLQ) and 679–700 (KKQQ…ASSR). Positions 541 to 550 (PSKDERERQL) are enriched in basic and acidic residues. Positions 885-916 (LGQCELKRKRTEEKLSDLRAKLALLLQKLQLG) form a coiled coil.

Expressed at very low level in male germ cells.

It is found in the nucleus. Its function is as follows. Required for spermatogenesis. Essential for de novo DNA methylation and silencing of transposable elements in the male embryonic germ cells. Not required for piRNA biosynthesis. This is MORC family CW-type zinc finger protein 1 from Mus musculus (Mouse).